The following is a 576-amino-acid chain: Adenine deaminase (576 aa).

It belongs to the metallo-dependent hydrolases superfamily. Adenine deaminase family. It depends on Mn(2+) as a cofactor.

The catalysed reaction is adenine + H2O + H(+) = hypoxanthine + NH4(+). The protein is Adenine deaminase of Bacillus pumilus (strain SAFR-032).